A 757-amino-acid chain; its full sequence is Transcription regulator rua1 (757 aa).

Disordered stretches follow at residues 122–169 (SSGS…LPVS), 181–218 (NHQV…SNQD), 237–295 (RNTG…NGYT), 372–393 (SADC…PYPL), and 422–582 (MELQ…IGNA). Residues 125-165 (SATKSEPSTCSSSTDFSMSSTADASTAPQHSSSGDSSMSSG) are compositionally biased toward low complexity. Polar residues-rich tracts occupy residues 181-190 (NHQVTTQDAS) and 200-218 (QPPS…SNQD). Positions 240-249 (GHRQHNRHQK) are enriched in basic residues. The segment covering 253–277 (LPQGQSCTNSGSSSRQVTRPNSPNH) has biased composition (polar residues). Pro residues predominate over residues 379 to 393 (PRPPSNSPEPHPYPL). Positions 428–437 (PARSNSTFGR) are enriched in polar residues. Basic residues predominate over residues 439–453 (SQRHHQPPPSHRQRS). Composition is skewed to low complexity over residues 454–465 (RTSASSISNTNA), 494–510 (ASQS…ATDA), and 543–582 (TSSS…IGNA). The C2H2-type 1 degenerate zinc finger occupies 661-692 (REGWCSLCPQGEWYSMKRSQYLYHMQFDHGIS). The C2H2-type 2; degenerate zinc-finger motif lies at 717-750 (GLCHHCNKWIPICFGPQRKRDFKAWFKHARKCHR).

The protein localises to the nucleus. Its function is as follows. Transcription factor; part of the gene cluster that mediates the biosynthesis of the glycolipid biosurfactant ustilagic acid (UA). UA is a secreted cellobiose glycolipid that is toxic for many microorganisms and confers biocontrol activity to U.maydis. Recognizes and binds to the specific 5'-T/G-G/T-C-G-C-A-T-A/T-C/T-C/T-G/A-3' upstream activating sequence found in all promoters of the UA biosynthesis genes. The sequence is that of Transcription regulator rua1 from Mycosarcoma maydis (Corn smut fungus).